A 331-amino-acid chain; its full sequence is Protoheme IX farnesyltransferase (331 aa).

A run of 9 helical transmembrane segments spans residues 22-42 (LVKP…MWMA), 50-70 (FGVT…INMV), 100-120 (FAGI…NLLA), 147-167 (IVIG…AATG), 174-194 (WVMF…LAIL), 220-240 (ILLY…PLHV), 241-261 (LGSF…WKAV), 273-293 (ATSL…AMGL), and 307-327 (LASL…LGAM).

Belongs to the UbiA prenyltransferase family. Protoheme IX farnesyltransferase subfamily.

The protein localises to the cell inner membrane. It catalyses the reaction heme b + (2E,6E)-farnesyl diphosphate + H2O = Fe(II)-heme o + diphosphate. It functions in the pathway porphyrin-containing compound metabolism; heme O biosynthesis; heme O from protoheme: step 1/1. Its function is as follows. Converts heme B (protoheme IX) to heme O by substitution of the vinyl group on carbon 2 of heme B porphyrin ring with a hydroxyethyl farnesyl side group. The chain is Protoheme IX farnesyltransferase from Synechococcus sp. (strain JA-3-3Ab) (Cyanobacteria bacterium Yellowstone A-Prime).